The following is a 103-amino-acid chain: Acylphosphatase-2 (103 aa).

Position 2 is an N-acetylserine (serine 2). The Acylphosphatase-like domain occupies 13-103 (SVDYEVFGRV…LDFSGFSTRY (91 aa)). Active-site residues include arginine 28 and asparagine 46.

This sequence belongs to the acylphosphatase family.

The catalysed reaction is an acyl phosphate + H2O = a carboxylate + phosphate + H(+). Functionally, its physiological role is not yet clear. This chain is Acylphosphatase-2 (ACYP2), found in Anas platyrhynchos (Mallard).